Here is a 576-residue protein sequence, read N- to C-terminus: Minor capsid protein P2 (576 aa).

Residues 13–35 (LFLYTNSIEMELLAVASIIGYGL) form a hydrophobic region. A disordered region spans residues 322–348 (TRGRPRTGDGDTEPIINPNGERDGTGS).

In terms of assembly, interacts with the major capsid protein.

The protein localises to the virion. In terms of biological role, one of the minor capsid proteins that constitute a network internal to the major capsid proteins and outside the lipid membrane. The minor capsid proteins glue and stabilize the capsomers. Also acts as a molecular tape measure protein that determines the size of the viral capsid. This Chlorella (PBCV-1) protein is Minor capsid protein P2.